We begin with the raw amino-acid sequence, 2475 residues long: Non-reducing polyketide synthase prhL (2475 aa).

Residues 14–253 (VLFGSKYSEI…HHADHLSAAQ (240 aa)) form an N-terminal acylcarrier protein transacylase domain (SAT) region. The 417-residue stretch at 384–800 (SIPIAVTGLA…GSNAAIVLKE (417 aa)) folds into the Ketosynthase family 3 (KS3) domain. Active-site for beta-ketoacyl synthase activity residues include cysteine 549, histidine 684, and histidine 723. A malonyl-CoA:ACP transacylase (MAT) domain region spans residues 910–1212 (LCFGGQTGNK…CPMDLSGPQA (303 aa)). Residue serine 997 is the For acyl/malonyl transferase activity of the active site. The N-terminal hotdog fold stretch occupies residues 1279–1407 (EGLKLVQLLK…GTISLSPGAN (129 aa)). In terms of domain architecture, PKS/mFAS DH spans 1279-1586 (EGLKLVQLLK…FTSVSIQSLR (308 aa)). The tract at residues 1282 to 1585 (KLVQLLKNEG…TFTSVSIQSL (304 aa)) is product template (PT) domain. Histidine 1312 serves as the catalytic Proton acceptor; for dehydratase activity. The tract at residues 1435–1586 (SSSGLKRSTV…FTSVSIQSLR (152 aa)) is C-terminal hotdog fold. The Proton donor; for dehydratase activity role is filled by aspartate 1493. A Carrier domain is found at 1626-1703 (SSNGDDLRTV…ALVQRIFPGR (78 aa)). O-(pantetheine 4'-phosphoryl)serine is present on serine 1663. The segment at 1865–2098 (HHTSEHKLLH…GFNWVDWTDN (234 aa)) is methyltransferase (CMeT) domain. The interval 2127–2475 (SDIHEETVVY…YEFLRSHVRL (349 aa)) is thioesterase (TE) domain. Active-site for thioesterase activity residues include serine 2250 and aspartate 2412.

The catalysed reaction is 3 malonyl-CoA + acetyl-CoA + 2 S-adenosyl-L-methionine = 3,5-dimethylorsellinate + 2 S-adenosyl-L-homocysteine + 3 CO2 + 4 CoA. The protein operates within secondary metabolite biosynthesis; terpenoid biosynthesis. Its function is as follows. Non-reducing polyketide synthase; part of the gene cluster that mediates the biosynthesis of paraherquonin, a meroterpenoid with a unique, highly congested hexacyclic molecular architecture. The first step of the pathway is the synthesis of 3,5-dimethylorsellinic acid (DMOA) by the polyketide synthase prhL. Synthesis of DMOA is followed by farnesylation by the prenyltransferase prhE, methylesterification by the methyl-transferase prhM, epoxidation of the prenyl chain by the flavin-dependent monooxygenase prhF, and cyclization of the farnesyl moiety by the terpene cyclase prhH, to yield the tetracyclic intermediate, protoaustinoid A. The short chain dehydrogenase prhI then oxidizes the C-3 alcohol group of the terpene cyclase product to transform protoaustinoid A into protoaustinoid B. The FAD-binding monooxygenase prhJ catalyzes the oxidation of protoaustinoid B into preaustinoid A which is further oxidized into preaustinoid A1 by FAD-binding monooxygenase phrK. Finally, prhA leads to berkeleydione via the berkeleyone B intermediate. PrhA is a multifunctional dioxygenase that first desaturates at C5-C6 to form berkeleyone B, followed by rearrangement of the A/B-ring to form the cycloheptadiene moiety in berkeleydione. Berkeleydione serves as the key intermediate for the biosynthesis of paraherquonin as well as many other meroterpenoids. The cytochrome P450 monooxygenases prhB, prhD, and prhN, as well as the isomerase prhC, are probably involved in the late stage of paraherquonin biosynthesis, after the production of berkeleydione. Especially prhC might be a multifunctional enzyme that catalyzes the D-ring expansion via intramolecular methoxy rearrangement, as well as the hydrolysis of the expanded D-ring. The protein is Non-reducing polyketide synthase prhL of Penicillium brasilianum.